The chain runs to 451 residues: MGLEPSWYLLLCLAVSGAAGTDPPTAPTTAERQRQPTDIILDCFLVTEDRHRGAFASSGDRERALLVLKQVPVLDDGSLEGITDFQGSTETKQDSPVIFEASVDLVQIPQAEALLHADCSGKAVTCEISKYFLQARQEATFEKAHWFISNMQVSRGGPSVSMVMKTLRDAEVGAVRHPTLNLPLSAQGTVKTQVEFQVTSETQTLNHLLGSSVSLHCSFSMAPGLDLTGVEWRLQHKGSGQLVYSWKTGQGQAKRKGATLEPEELLRAGNASLTLPNLTLKDEGNYICQISTSLYQAQQIMPLNILAPPKIQLHLANKDPLPSLVCSIAGYYPLDVGVTWIREELGGIPAQVSGASFSSLRQSTMGTYSISSTVMADPGPTGATYTCQVAHVSLEEPLTTSMRVLPNPEQRGTLGVIFASIIFLSALLLFLGLHRQQASSSRSTRPMRHSG.

Residues 1–20 form the signal peptide; it reads MGLEPSWYLLLCLAVSGAAG. Residues 21–412 lie on the Lumenal side of the membrane; that stretch reads TDPPTAPTTA…RVLPNPEQRG (392 aa). The 106-residue stretch at 196–301 folds into the Ig-like V-type domain; it reads FQVTSETQTL…TSLYQAQQIM (106 aa). 2 disulfide bridges follow: cysteine 217–cysteine 288 and cysteine 326–cysteine 387. 2 N-linked (GlcNAc...) asparagine glycosylation sites follow: asparagine 270 and asparagine 277. Positions 302–399 constitute an Ig-like C1-type domain; it reads PLNILAPPKI…AHVSLEEPLT (98 aa). A helical transmembrane segment spans residues 413–433; sequence TLGVIFASIIFLSALLLFLGL. Residues 434-451 lie on the Cytoplasmic side of the membrane; that stretch reads HRQQASSSRSTRPMRHSG.

Interacts with peptide-free HLA-A*02-B2M complexes or those loaded with low affinity peptides, likely facilitating peptide exchange onto higher affinity peptides. Interacts with MR1 in a ligand-independent way; this interaction may stabilize MR1 pool and facilitate ligand loading and dissociation. Widely expressed.

The protein resides in the cell membrane. Its subcellular location is the endoplasmic reticulum membrane. It is found in the microsome membrane. It localises to the golgi apparatus membrane. Component of the antigen processing and presentation pathway, which binds to MHC class I coupled with beta2-microglobulin/B2M. Association between TAPBPR and MHC class I occurs in the absence of a functional peptide-loading complex (PLC). Expression seems to slow down and down-regulate MHC class I surface expression. The protein is Tapasin-related protein (Tapbpl) of Mus musculus (Mouse).